A 459-amino-acid polypeptide reads, in one-letter code: Magnesium transporter MRS2-11, chloroplastic (459 aa).

A chloroplast-targeting transit peptide spans 1 to 62; the sequence is MALTPIPSTF…EALKVLSRSK (62 aa). Residues 76 to 122 form a disordered region; the sequence is GDYESLNVSDDDDGSDSNSSDGDNGGGRDDSKKIDSSSSSSSSDSTS. A compositionally biased stretch (basic and acidic residues) spans 101–110; the sequence is GGRDDSKKID. The segment covering 111–122 has biased composition (low complexity); that stretch reads SSSSSSSSDSTS. Helical transmembrane passes span 397–417 and 430–450; these read LLLQVGTFCVAVGALIAGIFG and AFWLTTGGIIIGAAVAFFLMY. A Required for magnesium transport activity motif is present at residues 417-419; the sequence is GMN.

It belongs to the CorA metal ion transporter (MIT) (TC 1.A.35.5) family. As to expression, expressed in the green part of the plant. Preferentially expressed in the spongy mesophyll cells and stomata of young leaves but also detected in cotyledons and at the base of the leaf petioles.

The protein localises to the plastid. It localises to the chloroplast membrane. High-affinity magnesium transporter that mediates the influx of magnesium in chloroplast. This chain is Magnesium transporter MRS2-11, chloroplastic (MRS2-11), found in Arabidopsis thaliana (Mouse-ear cress).